We begin with the raw amino-acid sequence, 335 residues long: Methionine aminopeptidase 1D, mitochondrial (335 aa).

Residues M1 to L19 constitute a mitochondrion transit peptide. H161 serves as a coordination point for substrate. Positions 178, 189, and 252 each coordinate a divalent metal cation. Residue H259 participates in substrate binding. A divalent metal cation is bound by residues E284 and E315.

Belongs to the peptidase M24A family. Methionine aminopeptidase type 1 subfamily. Requires Co(2+) as cofactor. The cofactor is Zn(2+). Mn(2+) serves as cofactor. Fe(2+) is required as a cofactor.

It is found in the mitochondrion. It carries out the reaction Release of N-terminal amino acids, preferentially methionine, from peptides and arylamides.. Removes the N-terminal methionine from nascent proteins. The N-terminal methionine is often cleaved when the second residue in the primary sequence is small and uncharged (Met-Ala-, Cys, Gly, Pro, Ser, Thr, or Val). Requires deformylation of the N(alpha)-formylated initiator methionine before it can be hydrolyzed. The protein is Methionine aminopeptidase 1D, mitochondrial (Metap1d) of Mus musculus (Mouse).